The sequence spans 378 residues: Putative F-box protein At5g51000 (378 aa).

Residues 1 to 47 enclose the F-box domain; it reads MSTMSDLFPDLVEEILSRVPITSLKAVKLTCKQWNDLSKDSSFTKNH.

The chain is Putative F-box protein At5g51000 from Arabidopsis thaliana (Mouse-ear cress).